The following is a 539-amino-acid chain: Laccase-1 (539 aa).

An N-terminal signal peptide occupies residues 1–21; that stretch reads MAFTAISLFLAALGVINTAFA. 2 Plastocyanin-like domains span residues 37–154 and 166–309; these read AEVN…YDPE and ESTV…HYLG. N-linked (GlcNAc...) asparagine glycosylation occurs at Asn-78. The Cu cation site is built by His-88 and His-90. Disulfide bonds link Cys-109–Cys-513 and Cys-141–Cys-228. N-linked (GlcNAc...) asparagine glycosylation is present at Asn-120. Residues His-133 and His-135 each coordinate Cu cation. Asn-202, Asn-233, Asn-240, Asn-293, Asn-318, Asn-353, Asn-385, and Asn-405 each carry an N-linked (GlcNAc...) asparagine glycan. Residues 374-495 form the Plastocyanin-like 3 domain; the sequence is SPTVPVLLQI…GFAVVMAEDP (122 aa). Cu cation-binding residues include His-421, His-424, and His-426. Asn-457 carries N-linked (GlcNAc...) asparagine glycosylation. Cu cation is bound by residues His-476, Cys-477, His-478, and His-482. N-linked (GlcNAc...) asparagine glycosylation is present at Asn-532.

It belongs to the multicopper oxidase family. Cu cation is required as a cofactor.

It localises to the secreted. It catalyses the reaction 4 hydroquinone + O2 = 4 benzosemiquinone + 2 H2O. Inhibited by chloride ions. Inhibited by citrate. Inhibited by oxalate. Activated by acetate. In terms of biological role, in vitro, has activity towards 2,2'-azino-bis(3-ethylbenzthiazoline-6-sulfonic acid) (ABTS), 2,6-dimethoxy-phenol, and guaiacol. Although brown rot fungi preferentially degrade hemicellulose and cellulose, the enzyme may contribute to generating small amounts of lignin breakdown products required for catalytic reactions. This chain is Laccase-1, found in Fomitopsis schrenkii (Brown rot fungus).